A 267-amino-acid chain; its full sequence is Dihydropteroate synthase (267 aa).

One can recognise a Pterin-binding domain in the interval Met-1 to Lys-251. Asn-11 is a binding site for Mg(2+). Residues Thr-51, Asp-84, Asn-103, Asp-167, Lys-203, and Arg-239–His-241 contribute to the (7,8-dihydropterin-6-yl)methyl diphosphate site.

The protein belongs to the DHPS family. As to quaternary structure, homodimer. It depends on Mg(2+) as a cofactor.

The enzyme catalyses (7,8-dihydropterin-6-yl)methyl diphosphate + 4-aminobenzoate = 7,8-dihydropteroate + diphosphate. It participates in cofactor biosynthesis; tetrahydrofolate biosynthesis; 7,8-dihydrofolate from 2-amino-4-hydroxy-6-hydroxymethyl-7,8-dihydropteridine diphosphate and 4-aminobenzoate: step 1/2. Functionally, catalyzes the condensation of para-aminobenzoate (pABA) with 6-hydroxymethyl-7,8-dihydropterin diphosphate (DHPt-PP) to form 7,8-dihydropteroate (H2Pte), the immediate precursor of folate derivatives. The polypeptide is Dihydropteroate synthase (folP) (Staphylococcus aureus (strain MRSA252)).